We begin with the raw amino-acid sequence, 176 residues long: Ribosome maturation factor RimM (176 aa).

Positions 93–168 (DDEVYIEDIL…TIRITPPPGL (76 aa)) constitute a PRC barrel domain.

Belongs to the RimM family. Binds ribosomal protein uS19.

Its subcellular location is the cytoplasm. An accessory protein needed during the final step in the assembly of 30S ribosomal subunit, possibly for assembly of the head region. Essential for efficient processing of 16S rRNA. May be needed both before and after RbfA during the maturation of 16S rRNA. It has affinity for free ribosomal 30S subunits but not for 70S ribosomes. The polypeptide is Ribosome maturation factor RimM (Oleidesulfovibrio alaskensis (strain ATCC BAA-1058 / DSM 17464 / G20) (Desulfovibrio alaskensis)).